The primary structure comprises 833 residues: Leucine--tRNA ligase (833 aa).

Positions 41-52 (PYPSGAGLHVGH) match the 'HIGH' region motif. Positions 610–614 (KMSKS) match the 'KMSKS' region motif. Residue K613 coordinates ATP.

The protein belongs to the class-I aminoacyl-tRNA synthetase family.

It is found in the cytoplasm. The enzyme catalyses tRNA(Leu) + L-leucine + ATP = L-leucyl-tRNA(Leu) + AMP + diphosphate. This is Leucine--tRNA ligase from Streptococcus pyogenes serotype M28 (strain MGAS6180).